The sequence spans 188 residues: Pyridoxal 5'-phosphate synthase subunit PdxT (188 aa).

46–48 (GES) contacts L-glutamine. The active-site Nucleophile is Cys-78. Residues Arg-105 and 134-135 (IR) contribute to the L-glutamine site. Active-site charge relay system residues include His-170 and Glu-172.

It belongs to the glutaminase PdxT/SNO family. In terms of assembly, in the presence of PdxS, forms a dodecamer of heterodimers. Only shows activity in the heterodimer.

The catalysed reaction is aldehydo-D-ribose 5-phosphate + D-glyceraldehyde 3-phosphate + L-glutamine = pyridoxal 5'-phosphate + L-glutamate + phosphate + 3 H2O + H(+). It carries out the reaction L-glutamine + H2O = L-glutamate + NH4(+). The protein operates within cofactor biosynthesis; pyridoxal 5'-phosphate biosynthesis. Functionally, catalyzes the hydrolysis of glutamine to glutamate and ammonia as part of the biosynthesis of pyridoxal 5'-phosphate. The resulting ammonia molecule is channeled to the active site of PdxS. The sequence is that of Pyridoxal 5'-phosphate synthase subunit PdxT from Moorella thermoacetica (strain ATCC 39073 / JCM 9320).